Consider the following 264-residue polypeptide: Major prion protein (264 aa).

Residues 1 to 24 (MVKSHIGSWILVLFVAMWSDVGLC) form the signal peptide. The interval 25–241 (KKRPKPGGGW…ESQAYYQRGA (217 aa)) is interaction with GRB2, ERI3 and SYN1. The segment at 28–119 (PKPGGGWNTG…WNKPSKPKTN (92 aa)) is disordered. A run of 6 repeats spans residues 54 to 62 (PQGGGGWGQ), 63 to 70 (PHGGGWGQ), 71 to 78 (PHGGGWGQ), 79 to 86 (PHGGGWGQ), 87 to 94 (PHGGGWGQ), and 95 to 103 (PHGGGGWGQ). The 6 X 8 AA tandem repeats of P-H-G-G-G-W-G-Q stretch occupies residues 54 to 103 (PQGGGGWGQPHGGGWGQPHGGGWGQPHGGGWGQPHGGGWGQPHGGGGWGQ). Positions 55 to 105 (QGGGGWGQPHGGGWGQPHGGGWGQPHGGGWGQPHGGGWGQPHGGGGWGQGG) are enriched in gly residues. Cu(2+)-binding residues include histidine 72, glycine 73, glycine 74, histidine 80, glycine 81, glycine 82, histidine 88, glycine 89, glycine 90, histidine 96, glycine 98, and glycine 99. A disulfide bridge connects residues cysteine 190 and cysteine 225. Asparagine 192 and asparagine 208 each carry an N-linked (GlcNAc...) asparagine glycan. Alanine 241 carries the GPI-anchor amidated alanine lipid modification. The propeptide at 242 to 264 (SVILFSSPPVILLISFLIFLIVG) is removed in mature form.

This sequence belongs to the prion family. As to quaternary structure, monomer and homodimer. Has a tendency to aggregate into amyloid fibrils containing a cross-beta spine, formed by a steric zipper of superposed beta-strands. Soluble oligomers may represent an intermediate stage on the path to fibril formation. Copper binding may promote oligomerization. Interacts with GRB2, APP, ERI3/PRNPIP and SYN1. Mislocalized cytosolically exposed PrP interacts with MGRN1; this interaction alters MGRN1 subcellular location and causes lysosomal enlargement. Interacts with KIAA1191.

The protein resides in the cell membrane. It localises to the golgi apparatus. In terms of biological role, its primary physiological function is unclear. Has cytoprotective activity against internal or environmental stresses. May play a role in neuronal development and synaptic plasticity. May be required for neuronal myelin sheath maintenance. May play a role in iron uptake and iron homeostasis. Soluble oligomers are toxic to cultured neuroblastoma cells and induce apoptosis (in vitro). Association with GPC1 (via its heparan sulfate chains) targets PRNP to lipid rafts. Also provides Cu(2+) or Zn(2+) for the ascorbate-mediated GPC1 deaminase degradation of its heparan sulfate side chains. The chain is Major prion protein (PRNP) from Antilope cervicapra (Blackbuck).